Here is a 374-residue protein sequence, read N- to C-terminus: 4-hydroxy-3-methylbut-2-en-1-yl diphosphate synthase (flavodoxin) (374 aa).

Positions 268, 271, 303, and 310 each coordinate [4Fe-4S] cluster.

Belongs to the IspG family. Requires [4Fe-4S] cluster as cofactor.

The catalysed reaction is (2E)-4-hydroxy-3-methylbut-2-enyl diphosphate + oxidized [flavodoxin] + H2O + 2 H(+) = 2-C-methyl-D-erythritol 2,4-cyclic diphosphate + reduced [flavodoxin]. The protein operates within isoprenoid biosynthesis; isopentenyl diphosphate biosynthesis via DXP pathway; isopentenyl diphosphate from 1-deoxy-D-xylulose 5-phosphate: step 5/6. Converts 2C-methyl-D-erythritol 2,4-cyclodiphosphate (ME-2,4cPP) into 1-hydroxy-2-methyl-2-(E)-butenyl 4-diphosphate. This chain is 4-hydroxy-3-methylbut-2-en-1-yl diphosphate synthase (flavodoxin), found in Geobacillus thermodenitrificans (strain NG80-2).